A 560-amino-acid chain; its full sequence is Putative ABC transporter ATP-binding protein SP_0483 (560 aa).

2 consecutive ABC transporter domains span residues 6–247 (IEWK…GIRE) and 297–528 (FRLE…ANLK). ATP-binding positions include 40-47 (GPSGSGKS) and 329-336 (GKNGAGKS).

The protein belongs to the ABC transporter superfamily.

The protein localises to the cell membrane. Probably part of an ABC transporter complex. Responsible for energy coupling to the transport system. This chain is Putative ABC transporter ATP-binding protein SP_0483, found in Streptococcus pneumoniae serotype 4 (strain ATCC BAA-334 / TIGR4).